We begin with the raw amino-acid sequence, 279 residues long: NADPH-dependent 7-cyano-7-deazaguanine reductase (279 aa).

Substrate is bound at residue 86–88 (IES). 88-89 (SK) contacts NADPH. Cysteine 187 (thioimide intermediate) is an active-site residue. Aspartate 194 (proton donor) is an active-site residue. 226-227 (HE) contacts substrate. 255 to 256 (RG) contributes to the NADPH binding site.

It belongs to the GTP cyclohydrolase I family. QueF type 2 subfamily. As to quaternary structure, homodimer.

The protein resides in the cytoplasm. It carries out the reaction 7-aminomethyl-7-carbaguanine + 2 NADP(+) = 7-cyano-7-deazaguanine + 2 NADPH + 3 H(+). The protein operates within tRNA modification; tRNA-queuosine biosynthesis. Functionally, catalyzes the NADPH-dependent reduction of 7-cyano-7-deazaguanine (preQ0) to 7-aminomethyl-7-deazaguanine (preQ1). The protein is NADPH-dependent 7-cyano-7-deazaguanine reductase of Actinobacillus pleuropneumoniae serotype 7 (strain AP76).